The chain runs to 234 residues: Leucyl/phenylalanyl-tRNA--protein transferase (234 aa).

The protein belongs to the L/F-transferase family.

The protein resides in the cytoplasm. It catalyses the reaction N-terminal L-lysyl-[protein] + L-leucyl-tRNA(Leu) = N-terminal L-leucyl-L-lysyl-[protein] + tRNA(Leu) + H(+). The enzyme catalyses N-terminal L-arginyl-[protein] + L-leucyl-tRNA(Leu) = N-terminal L-leucyl-L-arginyl-[protein] + tRNA(Leu) + H(+). It carries out the reaction L-phenylalanyl-tRNA(Phe) + an N-terminal L-alpha-aminoacyl-[protein] = an N-terminal L-phenylalanyl-L-alpha-aminoacyl-[protein] + tRNA(Phe). Functions in the N-end rule pathway of protein degradation where it conjugates Leu, Phe and, less efficiently, Met from aminoacyl-tRNAs to the N-termini of proteins containing an N-terminal arginine or lysine. This Escherichia fergusonii (strain ATCC 35469 / DSM 13698 / CCUG 18766 / IAM 14443 / JCM 21226 / LMG 7866 / NBRC 102419 / NCTC 12128 / CDC 0568-73) protein is Leucyl/phenylalanyl-tRNA--protein transferase.